Reading from the N-terminus, the 86-residue chain is Large ribosomal subunit protein uL23 (86 aa).

This sequence belongs to the universal ribosomal protein uL23 family. In terms of assembly, part of the 50S ribosomal subunit. Contacts protein L29.

Binds to 23S rRNA. One of the proteins that surrounds the polypeptide exit tunnel on the outside of the ribosome. The sequence is that of Large ribosomal subunit protein uL23 from Methanobrevibacter smithii (strain ATCC 35061 / DSM 861 / OCM 144 / PS).